Consider the following 204-residue polypeptide: Small ribosomal subunit protein eS8 (204 aa).

The protein belongs to the eukaryotic ribosomal protein eS8 family.

The sequence is that of Small ribosomal subunit protein eS8 (RPS8) from Griffithsia japonica (Red alga).